Reading from the N-terminus, the 1084-residue chain is Ribonucleoside-diphosphate reductase NrdEB subunit alpha (1084 aa).

Residues T152, 168–169, and G197 each bind substrate; that span reads SC. C169 and C793 are disulfide-bonded. Catalysis depends on N379, which acts as the Proton acceptor. The active-site Cysteine radical intermediate is the C381. A DOD-type homing endonuclease domain is found at 503–654; the sequence is IMGIIAGDGT…VQKLLLNMGV (152 aa). The Proton acceptor role is filled by E768. 964–968 contacts substrate; it reads PTGSI.

This sequence belongs to the ribonucleoside diphosphate reductase large chain family. In terms of assembly, tetramer of two alpha and two beta subunits. Post-translationally, this protein undergoes protein self-splicing that involves post-translational excision of the intervening region (intein) followed by peptide ligation.

It catalyses the reaction a 2'-deoxyribonucleoside 5'-diphosphate + [thioredoxin]-disulfide + H2O = a ribonucleoside 5'-diphosphate + [thioredoxin]-dithiol. Under complex allosteric control mediated by deoxynucleoside triphosphates and ATP binding. The type of nucleotide bound at the specificity site determines substrate preference. It seems probable that ATP makes the enzyme reduce CDP and UDP, dGTP favors ADP reduction and dTTP favors GDP reduction. Provides the precursors necessary for DNA synthesis. Catalyzes the biosynthesis of deoxyribonucleotides from the corresponding ribonucleotides. This chain is Ribonucleoside-diphosphate reductase NrdEB subunit alpha (nrdEB), found in Bacillus subtilis (strain 168).